Reading from the N-terminus, the 552-residue chain is Arginine--tRNA ligase (552 aa).

The 'HIGH' region signature appears at G124 to H134.

This sequence belongs to the class-I aminoacyl-tRNA synthetase family. In terms of assembly, monomer.

The protein localises to the cytoplasm. The catalysed reaction is tRNA(Arg) + L-arginine + ATP = L-arginyl-tRNA(Arg) + AMP + diphosphate. The protein is Arginine--tRNA ligase of Tropheryma whipplei (strain Twist) (Whipple's bacillus).